Consider the following 243-residue polypeptide: DNA repair protein RecO (243 aa).

The protein belongs to the RecO family.

Functionally, involved in DNA repair and RecF pathway recombination. This chain is DNA repair protein RecO, found in Xylella fastidiosa (strain M23).